Reading from the N-terminus, the 230-residue chain is 2,3-bisphosphoglycerate-dependent phosphoglycerate mutase (230 aa).

Residues 8–15 (RHGQSEWN), 21–22 (TG), Arg60, 87–90 (ERHY), Lys98, 114–115 (RR), and 183–184 (GN) contribute to the substrate site. Catalysis depends on His9, which acts as the Tele-phosphohistidine intermediate. Catalysis depends on Glu87, which acts as the Proton donor/acceptor.

Belongs to the phosphoglycerate mutase family. BPG-dependent PGAM subfamily.

It catalyses the reaction (2R)-2-phosphoglycerate = (2R)-3-phosphoglycerate. It participates in carbohydrate degradation; glycolysis; pyruvate from D-glyceraldehyde 3-phosphate: step 3/5. Functionally, catalyzes the interconversion of 2-phosphoglycerate and 3-phosphoglycerate. The protein is 2,3-bisphosphoglycerate-dependent phosphoglycerate mutase of Lactobacillus acidophilus (strain ATCC 700396 / NCK56 / N2 / NCFM).